Consider the following 517-residue polypeptide: Protein NETWORKED 4B (517 aa).

Disordered stretches follow at residues 1–29 (MASS…DSHN) and 101–159 (LQKN…EDGD). Positions 10 to 21 (KQFKRSMTKKSH) are enriched in basic residues. One can recognise an NAB domain in the interval 21-101 (HSWWWDSHNC…ERYDQASGEL (81 aa)). Residues 107–119 (SEIQSQSSLEISS) are compositionally biased toward low complexity. Over residues 121–135 (TKEKLSRRQSSHKEE) the composition is skewed to basic and acidic residues. Residues 156–486 (EDGDEALIRR…EQKREAIRQL (331 aa)) are a coiled coil.

This sequence belongs to the NET family.

Its function is as follows. Plant-specific actin binding protein. May be part of a membrane-cytoskeletal adapter complex. This Arabidopsis thaliana (Mouse-ear cress) protein is Protein NETWORKED 4B.